A 273-amino-acid polypeptide reads, in one-letter code: Large ribosomal subunit protein uL2c (273 aa).

2 disordered regions span residues 30-55 (EKKL…RHRG) and 222-243 (GSAM…PIGR). Residues 45–55 (NKGRITTRHRG) are compositionally biased toward basic residues.

This sequence belongs to the universal ribosomal protein uL2 family. Part of the 50S ribosomal subunit.

Its subcellular location is the plastid. This chain is Large ribosomal subunit protein uL2c (rpl2), found in Prototheca wickerhamii.